A 325-amino-acid polypeptide reads, in one-letter code: MATH domain and coiled-coil domain-containing protein At3g58340 (325 aa).

An MATH domain is found at 6–131 (DKKFCWEIKN…NGQVMIVAEV (126 aa)). Residues 266–315 (KVDWLEKKLDHVKEKKEKEQSGLIILQGIEQQLHELMHKCEKKKSEVLSV) are a coiled coil.

This Arabidopsis thaliana (Mouse-ear cress) protein is MATH domain and coiled-coil domain-containing protein At3g58340.